The chain runs to 316 residues: Beta-ketoacyl-[acyl-carrier-protein] synthase III (316 aa).

Residues cysteine 112 and histidine 243 contribute to the active site. Residues 244-248 are ACP-binding; the sequence is QANLR. The active site involves asparagine 273.

Belongs to the thiolase-like superfamily. FabH family. In terms of assembly, homodimer.

Its subcellular location is the cytoplasm. It catalyses the reaction malonyl-[ACP] + acetyl-CoA + H(+) = 3-oxobutanoyl-[ACP] + CO2 + CoA. The protein operates within lipid metabolism; fatty acid biosynthesis. Its function is as follows. Catalyzes the condensation reaction of fatty acid synthesis by the addition to an acyl acceptor of two carbons from malonyl-ACP. Catalyzes the first condensation reaction which initiates fatty acid synthesis and may therefore play a role in governing the total rate of fatty acid production. Possesses both acetoacetyl-ACP synthase and acetyl transacylase activities. Its substrate specificity determines the biosynthesis of branched-chain and/or straight-chain of fatty acids. The sequence is that of Beta-ketoacyl-[acyl-carrier-protein] synthase III from Histophilus somni (strain 2336) (Haemophilus somnus).